The chain runs to 1997 residues: Otoferlin (1997 aa).

Positions 1-98 constitute a C2 1 domain; that stretch reads MALLIHLKTV…VEESHVEVTD (98 aa). Over 1-1963 the chain is Cytoplasmic; sequence MALLIHLKTV…ARYFLWHTYR (1963 aa). A disordered region spans residues 128–171; it reads WDDGDFLGDESLQEEEKDSQETDGLLPGSRPSSRPPGEKSFRRA. Acidic residues predominate over residues 129–145; it reads DDGDFLGDESLQEEEKD. C2 domains lie at 236 to 357 and 400 to 531; these read KRSK…HKWA and IEGN…FLPT. Residues 642 to 694 are disordered; that stretch reads NEVDGLSRPQRPRPRKEPGDEEEVDLIQNASDDEAGDAGDLASVSSTPPMRPQ. Over residues 660-678 the composition is skewed to acidic residues; sequence GDEEEVDLIQNASDDEAGD. Residues 792-821 adopt a coiled-coil conformation; it reads RERLKSCMRELENMGQQARMLRAQVKRHTV. C2 domains follow at residues 944-1069 and 1115-1242; these read LHAF…PPRF and DRGP…PSWN. Ca(2+) is bound by residues Asp-976, Asp-982, Asp-1038, Asp-1040, and Asp-1046. Disordered regions lie at residues 1299–1324 and 1343–1405; these read AEEEKEKKKKKKGTAEEPEEEEPDES and LRQQ…KPKI. Composition is skewed to acidic residues over residues 1314–1324 and 1352–1361; these read EEPEEEEPDES and DLEEKEEVDN. Residues 1370–1383 are compositionally biased toward basic and acidic residues; sequence KGKEKARAAKEEKK. The segment covering 1387-1396 has biased composition (low complexity); sequence QSSGSGQGSE. C2 domains lie at 1464 to 1593 and 1714 to 1865; these read LPED…ATCG and DMPA…KQCT. Asp-1508, Asp-1514, Asp-1563, Asp-1565, Asp-1571, Asp-1836, Ser-1839, and Asp-1842 together coordinate Ca(2+). The chain crosses the membrane as a helical span at residues 1964–1984; it reads WLLLKLLLLLLLLLLLALFLY. Residues 1985-1997 are Extracellular-facing; it reads SVPGYLVKKILGA.

Belongs to the ferlin family. In terms of assembly, interacts with SNAP2; the interaction is direct. Interacts with STX1; the interaction is direct. Interacts with RAB8B. It depends on Ca(2+) as a cofactor. In terms of tissue distribution, isoform 1 and isoform 3 are found in adult brain. Isoform 2 is expressed in the fetus and in adult brain, heart, placenta, skeletal muscle and kidney.

The protein resides in the cytoplasmic vesicle. The protein localises to the secretory vesicle. It localises to the synaptic vesicle membrane. It is found in the basolateral cell membrane. Its subcellular location is the endoplasmic reticulum membrane. The protein resides in the golgi apparatus membrane. The protein localises to the presynaptic cell membrane. It localises to the cell membrane. Its function is as follows. Key calcium ion sensor involved in the Ca(2+)-triggered synaptic vesicle-plasma membrane fusion and in the control of neurotransmitter release at these output synapses. Interacts in a calcium-dependent manner to the presynaptic SNARE proteins at ribbon synapses of cochlear inner hair cells (IHCs) to trigger exocytosis of neurotransmitter. Also essential to synaptic exocytosis in immature outer hair cells (OHCs). May also play a role within the recycling of endosomes. In Homo sapiens (Human), this protein is Otoferlin (OTOF).